We begin with the raw amino-acid sequence, 85 residues long: Anti-neuroexcitation peptide 2 (85 aa).

The signal sequence occupies residues 1 to 21 (MKLSLLLVISASMLIDGLVNA). The 61-residue stretch at 22–82 (DGYIRGSNGC…TWKSESNTCG (61 aa)) folds into the LCN-type CS-alpha/beta domain. 4 disulfide bridges follow: Cys-31/Cys-81, Cys-35/Cys-56, Cys-42/Cys-63, and Cys-46/Cys-65.

Belongs to the long (4 C-C) scorpion toxin superfamily. Sodium channel inhibitor family. Beta subfamily. As to expression, expressed by the venom gland.

Its subcellular location is the secreted. Functionally, binds to sodium channels (Nav) and inhibits them. Recombinant ANEP delays the convulsion seizure of insect models by 18% and shows anti-neuroexcitatory activity. In Olivierus martensii (Manchurian scorpion), this protein is Anti-neuroexcitation peptide 2.